Here is a 380-residue protein sequence, read N- to C-terminus: Alcohol dehydrogenase 1 (380 aa).

The Zn(2+) site is built by Cys48, Thr50, His70, Cys100, Cys103, Cys106, Cys114, and Cys178. 2 residues coordinate an alcohol: Thr50 and His70. Thr50 contributes to the NAD(+) binding site. Residues 203 to 208, Asp227, Arg232, Thr273, Val296, 296 to 298, and Arg373 each bind NAD(+); these read GLGAVG and VGV.

This sequence belongs to the zinc-containing alcohol dehydrogenase family. Homodimer. Requires Zn(2+) as cofactor.

It is found in the cytoplasm. It catalyses the reaction a primary alcohol + NAD(+) = an aldehyde + NADH + H(+). The catalysed reaction is a secondary alcohol + NAD(+) = a ketone + NADH + H(+). This Trifolium repens (Creeping white clover) protein is Alcohol dehydrogenase 1 (ADH1).